The following is a 326-amino-acid chain: Beta-1,3-galactosyltransferase 1 (326 aa).

At 1-6 (MASKVS) the chain is on the cytoplasmic side. Residues 7–26 (CLYVLTVVCWASALWYLSIT) traverse the membrane as a helical; Signal-anchor for type II membrane protein segment. Residues 27–326 (RPTSSYTGSK…DMSSKKHLRC (300 aa)) lie on the Lumenal side of the membrane. Residues N47 and N151 are each glycosylated (N-linked (GlcNAc...) asparagine).

Belongs to the glycosyltransferase 31 family. It depends on Mn(2+) as a cofactor.

The protein resides in the golgi apparatus membrane. It catalyses the reaction an N-acetyl-beta-D-glucosaminyl derivative + UDP-alpha-D-galactose = a beta-D-galactosyl-(1-&gt;3)-N-acetyl-beta-D-glucosaminyl derivative + UDP + H(+). The enzyme catalyses a beta-D-GlcNAc-(1-&gt;3)-beta-D-Gal-(1-&gt;4)-beta-D-Glc-(1&lt;-&gt;1)-Cer(d18:1(4E)) + UDP-alpha-D-galactose = a beta-D-Gal-(1-&gt;3)-beta-D-GlcNAc-(1-&gt;3)-beta-D-Gal-(1-&gt;4)-beta-D-Glc-(1&lt;-&gt;1')-Cer(d18:1(4E)) + UDP + H(+). Its pathway is protein modification; protein glycosylation. Functionally, beta-1,3-galactosyltransferase that transfers galactose from UDP-galactose to substrates with a terminal beta-N-acetylglucosamine (beta-GlcNAc) residue. Involved in the biosynthesis of the carbohydrate moieties of glycolipids and glycoproteins. The chain is Beta-1,3-galactosyltransferase 1 (B3GALT1) from Gorilla gorilla gorilla (Western lowland gorilla).